We begin with the raw amino-acid sequence, 114 residues long: Ribonuclease P protein component (114 aa).

Belongs to the RnpA family. In terms of assembly, consists of a catalytic RNA component (M1 or rnpB) and a protein subunit.

It catalyses the reaction Endonucleolytic cleavage of RNA, removing 5'-extranucleotides from tRNA precursor.. In terms of biological role, RNaseP catalyzes the removal of the 5'-leader sequence from pre-tRNA to produce the mature 5'-terminus. It can also cleave other RNA substrates such as 4.5S RNA. The protein component plays an auxiliary but essential role in vivo by binding to the 5'-leader sequence and broadening the substrate specificity of the ribozyme. This is Ribonuclease P protein component from Lactiplantibacillus plantarum (strain ATCC BAA-793 / NCIMB 8826 / WCFS1) (Lactobacillus plantarum).